We begin with the raw amino-acid sequence, 211 residues long: Thiamine-phosphate synthase (211 aa).

Residues 37–41 (QLRIK) and N69 each bind 4-amino-2-methyl-5-(diphosphooxymethyl)pyrimidine. Mg(2+)-binding residues include D70 and D89. Residue S108 coordinates 4-amino-2-methyl-5-(diphosphooxymethyl)pyrimidine. 134-136 (TQT) is a 2-[(2R,5Z)-2-carboxy-4-methylthiazol-5(2H)-ylidene]ethyl phosphate binding site. K137 serves as a coordination point for 4-amino-2-methyl-5-(diphosphooxymethyl)pyrimidine. Residues G166 and 186-187 (VS) each bind 2-[(2R,5Z)-2-carboxy-4-methylthiazol-5(2H)-ylidene]ethyl phosphate.

This sequence belongs to the thiamine-phosphate synthase family. Mg(2+) is required as a cofactor.

The catalysed reaction is 2-[(2R,5Z)-2-carboxy-4-methylthiazol-5(2H)-ylidene]ethyl phosphate + 4-amino-2-methyl-5-(diphosphooxymethyl)pyrimidine + 2 H(+) = thiamine phosphate + CO2 + diphosphate. The enzyme catalyses 2-(2-carboxy-4-methylthiazol-5-yl)ethyl phosphate + 4-amino-2-methyl-5-(diphosphooxymethyl)pyrimidine + 2 H(+) = thiamine phosphate + CO2 + diphosphate. It catalyses the reaction 4-methyl-5-(2-phosphooxyethyl)-thiazole + 4-amino-2-methyl-5-(diphosphooxymethyl)pyrimidine + H(+) = thiamine phosphate + diphosphate. The protein operates within cofactor biosynthesis; thiamine diphosphate biosynthesis; thiamine phosphate from 4-amino-2-methyl-5-diphosphomethylpyrimidine and 4-methyl-5-(2-phosphoethyl)-thiazole: step 1/1. In terms of biological role, condenses 4-methyl-5-(beta-hydroxyethyl)thiazole monophosphate (THZ-P) and 2-methyl-4-amino-5-hydroxymethyl pyrimidine pyrophosphate (HMP-PP) to form thiamine monophosphate (TMP). This chain is Thiamine-phosphate synthase, found in Salmonella choleraesuis (strain SC-B67).